The following is a 148-amino-acid chain: UPF0260 protein Spro_2751 (148 aa).

The protein belongs to the UPF0260 family.

The chain is UPF0260 protein Spro_2751 from Serratia proteamaculans (strain 568).